A 554-amino-acid chain; its full sequence is Phenylalanine--tRNA ligase beta subunit (554 aa).

Residues 276-351 (LTPRYREISI…KNHGYEKFEG (76 aa)) enclose the B5 domain. D329, D335, E338, and E339 together coordinate Mg(2+).

Belongs to the phenylalanyl-tRNA synthetase beta subunit family. Type 2 subfamily. In terms of assembly, tetramer of two alpha and two beta subunits. Requires Mg(2+) as cofactor.

The protein resides in the cytoplasm. It catalyses the reaction tRNA(Phe) + L-phenylalanine + ATP = L-phenylalanyl-tRNA(Phe) + AMP + diphosphate + H(+). The protein is Phenylalanine--tRNA ligase beta subunit of Methanococcus vannielii (strain ATCC 35089 / DSM 1224 / JCM 13029 / OCM 148 / SB).